We begin with the raw amino-acid sequence, 678 residues long: Exoribonuclease 2 (678 aa).

One can recognise an RNB domain in the interval 193 to 521 (REDLTALPFV…INHRLLKAHI (329 aa)). In terms of domain architecture, S1 motif spans 568–650 (ETRFQAEIFD…ENRSLVGKPT (83 aa)). Residues 659 to 678 (ETQTSAEQPAEGAENNEPQV) form a disordered region.

It belongs to the RNR ribonuclease family. RNase II subfamily.

It is found in the cytoplasm. The catalysed reaction is Exonucleolytic cleavage in the 3'- to 5'-direction to yield nucleoside 5'-phosphates.. Its function is as follows. Involved in mRNA degradation. Hydrolyzes single-stranded polyribonucleotides processively in the 3' to 5' direction. The protein is Exoribonuclease 2 of Vibrio cholerae serotype O1 (strain ATCC 39315 / El Tor Inaba N16961).